The chain runs to 417 residues: Multifunctional CCA protein (417 aa).

Gly8 and Arg11 together coordinate ATP. CTP contacts are provided by Gly8 and Arg11. Positions 21 and 23 each coordinate Mg(2+). Residues Arg91, Arg137, and Arg140 each contribute to the ATP site. Positions 91, 137, and 140 each coordinate CTP. Positions Ser225–Phe326 constitute an HD domain.

This sequence belongs to the tRNA nucleotidyltransferase/poly(A) polymerase family. Bacterial CCA-adding enzyme type 1 subfamily. As to quaternary structure, monomer. Can also form homodimers and oligomers. Requires Mg(2+) as cofactor. The cofactor is Ni(2+).

It catalyses the reaction a tRNA precursor + 2 CTP + ATP = a tRNA with a 3' CCA end + 3 diphosphate. The enzyme catalyses a tRNA with a 3' CCA end + 2 CTP + ATP = a tRNA with a 3' CCACCA end + 3 diphosphate. Catalyzes the addition and repair of the essential 3'-terminal CCA sequence in tRNAs without using a nucleic acid template. Adds these three nucleotides in the order of C, C, and A to the tRNA nucleotide-73, using CTP and ATP as substrates and producing inorganic pyrophosphate. tRNA 3'-terminal CCA addition is required both for tRNA processing and repair. Also involved in tRNA surveillance by mediating tandem CCA addition to generate a CCACCA at the 3' terminus of unstable tRNAs. While stable tRNAs receive only 3'-terminal CCA, unstable tRNAs are marked with CCACCA and rapidly degraded. This Neisseria meningitidis serogroup C (strain 053442) protein is Multifunctional CCA protein.